Consider the following 439-residue polypeptide: Large ribosomal subunit protein mL65 (439 aa).

Belongs to the mitochondrion-specific ribosomal protein mL65 family. As to quaternary structure, component of the mitochondrial large ribosomal subunit (mt-LSU). Mature mammalian 55S mitochondrial ribosomes consist of a small (28S) and a large (39S) subunit. The 28S small subunit contains a 12S ribosomal RNA (12S mt-rRNA) and 30 different proteins. The 39S large subunit contains a 16S rRNA (16S mt-rRNA), a copy of mitochondrial valine transfer RNA (mt-tRNA(Val)), which plays an integral structural role, and 52 different proteins. mL65 forms a heterodimer with mL37. In terms of tissue distribution, heart, skeletal muscle, kidney and liver. Lower expression in placenta and peripheral blood leukocytes.

It is found in the mitochondrion. The polypeptide is Large ribosomal subunit protein mL65 (MRPS30) (Homo sapiens (Human)).